A 434-amino-acid polypeptide reads, in one-letter code: Probable transcription factor HMS1 (434 aa).

The 76-residue stretch at 266-341 folds into the bHLH domain; the sequence is TGRVSHNIIE…TKSIEYICHL (76 aa). The interval 365–434 is disordered; sequence HLTEPSQPLS…DMDFNNAGDF (70 aa). Composition is skewed to polar residues over residues 368 to 382 and 402 to 423; these read EPSQ…SEQV and PLHN…TNNS.

Interacts with the G1/S-specific cyclin PCL1. In terms of processing, phosphorylated by the cyclin-CDK complex PCL1-PHO85.

It is found in the nucleus. Involved in exit from mitosis and pseudohyphal differentiation. The protein is Probable transcription factor HMS1 (HMS1) of Saccharomyces cerevisiae (strain ATCC 204508 / S288c) (Baker's yeast).